We begin with the raw amino-acid sequence, 1506 residues long: Gag-Pol polyprotein (1506 aa).

2 CCHC-type zinc fingers span residues 385-402 and 404-421; these read QKCY…QCRQ and IICH…DCRQ. Residues 459 to 530 enclose the Peptidase A2 domain; sequence KKLLVDTGAD…SPVEVLGRDN (72 aa). The active-site Protease; shared with dimeric partner is D464. Residues 587–776 enclose the Reverse transcriptase domain; that stretch reads EGKVGRAPPH…YPAKWLGFEL (190 aa). Mg(2+) is bound by residues D652, D727, D728, D980, E1012, D1032, and D1085. The region spanning 971–1093 is the RNase H type-1 domain; it reads VVPGPTYYTD…IDRYISEIFL (123 aa). An Integrase-type zinc finger spans residues 1228 to 1269; it reads ENIPLAEEEHNKWHQDAVSLHLEFGIPRTAAEDIVQQCDVCQ. H1237, H1241, C1265, and C1268 together coordinate Zn(2+). In terms of domain architecture, Integrase catalytic spans 1270 to 1430; the sequence is ENKMPSTLRG…SPMDIFIFNK (161 aa). Residues D1291, D1343, and E1379 each contribute to the Mg(2+) site. Residues 1447 to 1499 constitute a DNA-binding region (integrase-type); it reads RFCYYRTRKRGHPGEWQGPTQVLWGGDGAIVVKDRGTDRYLVIANKDVKFIPP.

The protein belongs to the retroviral Pol polyprotein family. In terms of assembly, homotetramer; further associates as a homohexadecamer. It depends on Mg(2+) as a cofactor. In terms of processing, specific enzymatic cleavages by the viral protease yield mature proteins.

It localises to the virion. The catalysed reaction is 3'-end directed exonucleolytic cleavage of viral RNA-DNA hybrid.. It catalyses the reaction Endonucleolytic cleavage to 5'-phosphomonoester.. It carries out the reaction dUTP + H2O = dUMP + diphosphate + H(+). The enzyme catalyses DNA(n) + a 2'-deoxyribonucleoside 5'-triphosphate = DNA(n+1) + diphosphate. Mediates, with Gag polyprotein, the essential events in virion assembly, including binding the plasma membrane, making the protein-protein interactions necessary to create spherical particles, recruiting the viral Env proteins, and packaging the genomic RNA via direct interactions with the RNA packaging sequence. Functionally, targets the polyprotein to the plasma membrane. In terms of biological role, forms the core that encapsulates the genomic RNA-nucleocapsid complex in the virion. Its function is as follows. Encapsulates and protects viral dimeric unspliced genomic RNA (gRNA). Binds these RNAs through its zinc fingers. Acts as a nucleic acid chaperone which is involved in rearrangement of nucleic acid secondary structure during gRNA retrotranscription. Also facilitates template switch leading to recombination. The aspartyl protease mediates proteolytic cleavages of Gag and Gag-Pol polyproteins during or shortly after the release of the virion from the plasma membrane. Cleavages take place as an ordered, step-wise cascade to yield mature proteins. This process is called maturation. Displays maximal activity during the budding process just prior to particle release from the cell. Functionally, RT is a multifunctional enzyme that converts the viral dimeric RNA genome into dsDNA in the cytoplasm, shortly after virus entry into the cell. This enzyme displays a DNA polymerase activity that can copy either DNA or RNA templates, and a ribonuclease H (RNase H) activity that cleaves the RNA strand of RNA-DNA heteroduplexes in a partially processive 3' to 5' endonucleasic mode. Conversion of viral genomic RNA into dsDNA requires many steps. A tRNA binds to the primer-binding site (PBS) situated at the 5' end of the viral RNA. RT uses the 3' end of the tRNA primer to perfom a short round of RNA-dependent minus-strand DNA synthesis. The reading proceeds through the U5 region and ends after the repeated (R) region which is present at both ends of viral RNA. The portion of the RNA-DNA heteroduplex is digested by the RNase H, resulting in a ssDNA product attached to the tRNA primer. This ssDNA/tRNA hybridizes with the identical R region situated at the 3' end of viral RNA. This template exchange, known as minus-strand DNA strong stop transfer, can be either intra- or intermolecular. RT uses the 3' end of this newly synthesized short ssDNA to perfom the RNA-dependent minus-strand DNA synthesis of the whole template. RNase H digests the RNA template except for a polypurine tract (PPT) situated at the 5' end of the genome. It is not clear if both polymerase and RNase H activities are simultaneous. RNase H probably can proceed both in a polymerase-dependent (RNA cut into small fragments by the same RT performing DNA synthesis) and a polymerase-independent mode (cleavage of remaining RNA fragments by free RTs). Secondly, RT performs DNA-directed plus-strand DNA synthesis using the PPT that has not been removed by RNase H as primers. PPT and tRNA primers are then removed by RNase H. The 3' and 5' ssDNA PBS regions hybridize to form a circular dsDNA intermediate. Strand displacement synthesis by RT to the PBS and PPT ends produces a blunt ended, linear dsDNA copy of the viral genome that includes long terminal repeats (LTRs) at both ends. In terms of biological role, catalyzes viral DNA integration into the host chromosome, by performing a series of DNA cutting and joining reactions. The protein is Gag-Pol polyprotein (pol) of Maedi visna virus (strain KV1772) (MVV).